A 196-amino-acid polypeptide reads, in one-letter code: Guanylate kinase (196 aa).

The Guanylate kinase-like domain maps to 8–189 (GKIIIISGPS…AADKLRHILY (182 aa)). ATP is bound at residue 15–22 (GPSGVGKK).

Belongs to the guanylate kinase family.

Its subcellular location is the cytoplasm. It carries out the reaction GMP + ATP = GDP + ADP. In terms of biological role, essential for recycling GMP and indirectly, cGMP. The polypeptide is Guanylate kinase (Malacoplasma penetrans (strain HF-2) (Mycoplasma penetrans)).